We begin with the raw amino-acid sequence, 61 residues long: MAKDYVTGKRTHFGNTRSHALNHSRRSWKANLQKVRILVDGKPKKVWVSARTLKSGKVTRV.

The disordered stretch occupies residues 1–26 (MAKDYVTGKRTHFGNTRSHALNHSRR).

It belongs to the bacterial ribosomal protein bL28 family.

In Lactiplantibacillus plantarum (strain ATCC BAA-793 / NCIMB 8826 / WCFS1) (Lactobacillus plantarum), this protein is Large ribosomal subunit protein bL28.